The primary structure comprises 1375 residues: BNI1-related protein 1 (1375 aa).

Residues 94-490 (CMPQDASLVE…YLIDSFQVST (397 aa)) enclose the GBD/FH3 domain. The stretch at 520 to 601 (QSDEIARRAV…ITTHQRLYDQ (82 aa)) forms a coiled coil. S621 carries the post-translational modification Phosphoserine. In terms of domain architecture, FH1 spans 659-851 (SSYLTDANNE…LVTPPAPPLP (193 aa)). The tract at residues 661-684 (YLTDANNENESQNESEDKSKDSLF) is disordered. A Phosphoserine modification is found at S751. Disordered regions lie at residues 764–785 (KLPQ…QSLL), 817–839 (AVPP…GPSN), and 1285–1309 (KSLL…GEKV). Composition is skewed to pro residues over residues 767-781 (QLPP…PPLP) and 818-828 (VPPPPPPPPLP). An FH2 domain is found at 868-1290 (DLKPPPTEKR…YEQRKSLLDM (423 aa)). Residues 1302–1336 (DENDGEKVNRDAVDLLISKLREVKKDPEPLRRRKS) form the DAD domain.

Belongs to the formin homology family. BNI1 subfamily. In terms of assembly, interacts with profilin at the FH1 domain.

In terms of biological role, may organize microtubules by mediating spindle positioning and movement in the budding process. Potential target of the RHO family members. The protein is BNI1-related protein 1 (BNR1) of Saccharomyces cerevisiae (strain ATCC 204508 / S288c) (Baker's yeast).